The primary structure comprises 162 residues: UPF0260 protein Caul_3920 (162 aa).

The protein belongs to the UPF0260 family.

The polypeptide is UPF0260 protein Caul_3920 (Caulobacter sp. (strain K31)).